The chain runs to 973 residues: Ras-related protein Rab-44 (973 aa).

The segment covering 1 to 21 (MEKGKGVSRKGRKLASSRRRQ) has biased composition (basic residues). Positions 1–42 (MEKGKGVSRKGRKLASSRRRQAREPADGQDAPVAAEAESWPS) are disordered. Residues 77–111 (GGEEPQMIFDWVDVESRGHLSLEEFSSGLKNVFGS) enclose the EF-hand domain. The tract at residues 112-140 (SPGTHRLRTKRSLPSQRESVTSTLPVPEE) is disordered. Residues 123–135 (SLPSQRESVTSTL) show a composition bias toward polar residues. A coiled-coil region spans residues 219–310 (LYKVRQLYEE…ERDLAGQLEE (92 aa)). 4 disordered regions span residues 319–368 (RGHL…FGNN), 421–481 (FSQE…GSFL), 493–708 (GTVE…GLAV), and 724–779 (EAQP…GKPQ). Over residues 428–440 (DPDPGPRGSPEVP) the composition is skewed to pro residues. Residues 445 to 457 (KDGKGVEDPKGQD) show a composition bias toward basic and acidic residues. Positions 513-524 (GLSSSPQSPAGS) are enriched in low complexity. Basic and acidic residues-rich tracts occupy residues 548–559 (SLEREVMAEDLK), 598–608 (HLARQESHAKG), and 654–663 (SESHGLEARS). Polar residues predominate over residues 665 to 680 (ESPQQDDPLPNTSQPP). A compositionally biased stretch (basic and acidic residues) spans 750–766 (AESRPEDPRTDLQEAER). Residues 792-799 (GDSNVGKT), 840-844 (DTAGQ), and 898-901 (NKMD) each bind GTP. Residues cysteine 971 and cysteine 972 are each lipidated (S-geranylgeranyl cysteine).

It belongs to the small GTPase superfamily. Rab family.

It is found in the cell membrane. This chain is Ras-related protein Rab-44 (Rab44), found in Mus musculus (Mouse).